The sequence spans 528 residues: Glutamyl-tRNA(Gln) amidotransferase subunit A, mitochondrial (528 aa).

Catalysis depends on Lys-76, which acts as the Charge relay system. A disordered region spans residues 148 to 167; that stretch reads YREKRKQNPHSENEDSDWLI. Residue Ser-171 is the Charge relay system of the active site. The active-site Acyl-ester intermediate is Ser-195.

This sequence belongs to the amidase family. GatA subfamily. Subunit of the heterotrimeric GatCAB amidotransferase (AdT) complex, composed of A (QRSL1), B (GATB) and C (GATC) subunits.

It is found in the mitochondrion. The catalysed reaction is L-glutamyl-tRNA(Gln) + L-glutamine + ATP + H2O = L-glutaminyl-tRNA(Gln) + L-glutamate + ADP + phosphate + H(+). In terms of biological role, allows the formation of correctly charged Gln-tRNA(Gln) through the transamidation of misacylated Glu-tRNA(Gln) in the mitochondria. The reaction takes place in the presence of glutamine and ATP through an activated gamma-phospho-Glu-tRNA(Gln). The chain is Glutamyl-tRNA(Gln) amidotransferase subunit A, mitochondrial from Homo sapiens (Human).